The following is a 556-amino-acid chain: Phenylalanine--tRNA ligase beta subunit (556 aa).

Positions Met269–Pro345 constitute a B5 domain. Positions 323, 329, 332, and 333 each coordinate Mg(2+).

This sequence belongs to the phenylalanyl-tRNA synthetase beta subunit family. Type 2 subfamily. As to quaternary structure, tetramer of two alpha and two beta subunits. The cofactor is Mg(2+).

It is found in the cytoplasm. The catalysed reaction is tRNA(Phe) + L-phenylalanine + ATP = L-phenylalanyl-tRNA(Phe) + AMP + diphosphate + H(+). This chain is Phenylalanine--tRNA ligase beta subunit, found in Thermofilum pendens (strain DSM 2475 / Hrk 5).